The following is a 641-amino-acid chain: Threonine--tRNA ligase (641 aa).

Positions 1 to 61 constitute a TGS domain; the sequence is MPVITLPDGS…ENDTELAIVT (61 aa). The tract at residues 242 to 533 is catalytic; that stretch reads DHRKIGKKLG…LIEEYEGAFP (292 aa). Residues Cys333, His384, and His510 each coordinate Zn(2+).

This sequence belongs to the class-II aminoacyl-tRNA synthetase family. As to quaternary structure, homodimer. Zn(2+) is required as a cofactor.

Its subcellular location is the cytoplasm. The enzyme catalyses tRNA(Thr) + L-threonine + ATP = L-threonyl-tRNA(Thr) + AMP + diphosphate + H(+). Catalyzes the attachment of threonine to tRNA(Thr) in a two-step reaction: L-threonine is first activated by ATP to form Thr-AMP and then transferred to the acceptor end of tRNA(Thr). Also edits incorrectly charged L-seryl-tRNA(Thr). The polypeptide is Threonine--tRNA ligase (Marinobacter nauticus (strain ATCC 700491 / DSM 11845 / VT8) (Marinobacter aquaeolei)).